The primary structure comprises 443 residues: MISLAVFPSDFLRSTRSVFLCGDSNLDLTSSVEQCRSRTRDLRTPRRKRDRIPCLNAVGDKFLQVESFSRDEAFSTWNSHCRPLCVVSFVPSQSSVVFSDLSLQAALSRPASACLLCLRVSRVSTFLFRFSAMAKLSSAPRVLVLSAEDSVVSAADASKKDTVLTVLHPDTIIENAADAPSVLYDGVLILDAGKSRENATGNSQGKSAEFAAARSALQAFAQAVCRLVAAGGFVFLAGGSGEREEVHRLVKRLLIYEGLVSAQDSEVAAFVADHLPRVDSSLMWTGRKPTWAAGVADALSGNRGALPNGTAQTDGDDFIDESTLIDPTESYQPLGKDRSSCASRPKACPNCTCGRKEAEEAAEKEERRRKLETGEIRSSCGNCYLGDAFRCAGCPYRGMPAFKPGEKVSLEATSVEAPGGGMQKQVATVMSNKVQITDLGDDM.

Positions 136 to 301 (LSSAPRVLVL…AAGVADALSG (166 aa)) are N-terminal SAM-like domain. Positions 302-331 (NRGALPNGTAQTDGDDFIDESTLIDPTESY) are linker. Cys341, Cys348, Cys351, and Cys353 together coordinate [2Fe-2S] cluster. The fe-S binding site A stretch occupies residues 341–353 (CASRPKACPNCTC). 4 residues coordinate [4Fe-4S] cluster: Cys380, Cys383, Cys391, and Cys394. Short sequence motifs (cx2C motif) lie at residues 380-383 (CGNC) and 391-394 (CAGC). The fe-S binding site B stretch occupies residues 380 to 394 (CGNCYLGDAFRCAGC).

It belongs to the anamorsin family. Monomer. [2Fe-2S] cluster serves as cofactor. [4Fe-4S] cluster is required as a cofactor.

It is found in the cytoplasm. Its subcellular location is the mitochondrion intermembrane space. Its function is as follows. Component of the cytosolic iron-sulfur (Fe-S) protein assembly (CIA) machinery. Required for the maturation of extramitochondrial Fe-S proteins. Part of an electron transfer chain functioning in an early step of cytosolic Fe-S biogenesis, facilitating the de novo assembly of a [4Fe-4S] cluster on the cytosolic Fe-S scaffold complex. Electrons are transferred from NADPH via a FAD- and FMN-containing diflavin oxidoreductase. Together with the diflavin oxidoreductase, also required for the assembly of the diferric tyrosyl radical cofactor of ribonucleotide reductase (RNR), probably by providing electrons for reduction during radical cofactor maturation in the catalytic small subunit. This chain is Anamorsin homolog, found in Toxoplasma gondii (strain ATCC 50861 / VEG).